The chain runs to 713 residues: Oligopeptidase PhomG (713 aa).

H461 is a binding site for Zn(2+). E462 is an active-site residue. Positions 465 and 468 each coordinate Zn(2+).

This sequence belongs to the peptidase M3 family. Monomer. Zn(2+) is required as a cofactor.

Its pathway is mycotoxin biosynthesis. Oligopeptidase; part of the gene cluster that mediates the biosynthesis of the phomopsins, a group of hexapeptide mycotoxins which infects lupins and causes lupinosis disease in livestock. Within the pathway, phomG and phomG' are probably involved in the processing of the phomA and phomA' precursors. The pathway starts with the processing of the precursor phomA by several endopeptidases including kexin proteases as well as the cluster-specific S41 family peptidase phomP1 and the oligopeptidase phomG to produce 10 identical copies of the hexapeptide Tyr-Val-Ile-Pro-Ile-Asp. After being excised from the precursor peptide, the core peptides are cyclized and modified post-translationally by enzymes encoded within the gene cluster. The timing and order of proteolysis of the phomA precursor and PTMs are still unknown. Two tyrosinase-like enzymes, phomQ1 and phomQ2, catalyze the chlorination and hydroxylation of Tyr, respectively. PhomYb, is proposed to be involved in the construction of the macrocyclic structure. The other 4 ustYa family proteins may be involved in PTMs that generate the unique structure of phomopsin A. PhomYa is required for the hydroxylation of C-beta of Tyr. PhomYc, phomYd, and phomYe are responsible for the biosynthesis of 2,3-dehydroisoleucine (dIle), 2,3-dehydroaspartic acid (dAsp), and 3,4-dehydroproline (dPro), respectively. While dIle formation by phomYc is indispensable for the installation of dAsp by phomYd, the order of the other PTMs have not been elucidated yet. Most of the biosynthetic enzymes likely have broad substrate specificity, and thus, there might be a metabolic grid from a precursor to phomopsin A. The enzyme(s) responsible for the biosynthesis of 3,4-dehydrovaline (dVal) have also not been identified yet. Finally, phomM acts as an S-adenosylmethionine-dependent alpha-N-methyltransferase that catalyzes two successive N-methylation reactions, converting N-desmethyl-phomopsin A to phomopsin A and phomopsin A further to an N,N-dimethylated congener called phomopsin E. This Diaporthe leptostromiformis (Lupinosis disease fungus) protein is Oligopeptidase PhomG.